A 232-amino-acid chain; its full sequence is 2,3,4,5-tetrahydropyridine-2,6-dicarboxylate N-acetyltransferase (232 aa).

The protein belongs to the transferase hexapeptide repeat family. DapH subfamily.

The catalysed reaction is (S)-2,3,4,5-tetrahydrodipicolinate + acetyl-CoA + H2O = L-2-acetamido-6-oxoheptanedioate + CoA. It participates in amino-acid biosynthesis; L-lysine biosynthesis via DAP pathway; LL-2,6-diaminopimelate from (S)-tetrahydrodipicolinate (acetylase route): step 1/3. Catalyzes the transfer of an acetyl group from acetyl-CoA to tetrahydrodipicolinate. This chain is 2,3,4,5-tetrahydropyridine-2,6-dicarboxylate N-acetyltransferase, found in Streptococcus pneumoniae serotype 2 (strain D39 / NCTC 7466).